The chain runs to 1698 residues: Protein 4.1 homolog (1698 aa).

Residues 1-31 are disordered; that stretch reads MPAEIKPSAPAEPETPTKSKPKSSSSSHGKP. Residues 12-27 are compositionally biased toward low complexity; it reads EPETPTKSKPKSSSSS. An FERM domain is found at 32 to 314; sequence ALARVTLLDG…EHHTFFRLMT (283 aa). Residues 317 to 434 form a hydrophilic region; the sequence is PVSKSKMFPV…KEEKERKERE (118 aa). 2 disordered regions span residues 335 to 361 and 374 to 710; these read GRTQ…SGAR and EKEK…SDPT. A compositionally biased stretch (basic and acidic residues) spans 374–448; it reads EKEKVARKSS…EEKKKAEKAA (75 aa). Positions 449–461 are enriched in low complexity; it reads KAALAAGAAAGAA. Phosphoserine occurs at positions 471, 474, and 478. Residues 499–514 are compositionally biased toward basic and acidic residues; sequence KDGKDKSGKDKDKEVG. The span at 562–571 shows a compositional bias: polar residues; it reads DGNTSPTRKS. Position 566 is a phosphoserine (serine 566). Basic and acidic residues predominate over residues 579–589; it reads YDQDPNSRKSG. A compositionally biased stretch (polar residues) spans 594–603; it reads EQLSPTSQQK. Positions 618–627 are enriched in basic and acidic residues; sequence ALKETAEKLK. Phosphoserine occurs at positions 659 and 687. Over residues 684–696 the composition is skewed to polar residues; sequence RSYSPTKGPQGYS. Phosphothreonine is present on threonine 689. A phosphoserine mark is found at serine 697, serine 1398, serine 1401, and serine 1402. Residues 1286–1698 form a C-terminal (CTD) region; that stretch reads GEIVQVDPND…EKIEIQQQTQ (413 aa). Threonine 1407 carries the post-translational modification Phosphothreonine. The span at 1509–1532 shows a compositional bias: basic and acidic residues; the sequence is LGKNAKTEQLEEKTVATTRTHDPN. Positions 1509 to 1599 are disordered; that stretch reads LGKNAKTEQL…SPLFTTSATT (91 aa). A compositionally biased stretch (polar residues) spans 1533–1554; the sequence is KQQQRVVTQEVKTTATVTSGDQ. The span at 1561–1571 shows a compositional bias: low complexity; it reads VSSTSSGDSGT. Positions 1584 to 1599 are enriched in polar residues; it reads RTDNQKSPLFTTSATT. Serine 1590 bears the Phosphoserine mark.

At onset of germ band retraction, expression is seen in epidermis, hindgut and foregut. During retraction, expression extends to tracheal branches and salivary glands.

The protein resides in the cell junction. It localises to the septate junction. Functionally, an integral component of the septate junction. May play a role in cell-cell interactions that are necessary for proper development. Vital for embryonic development. The sequence is that of Protein 4.1 homolog (cora) from Drosophila melanogaster (Fruit fly).